Reading from the N-terminus, the 447-residue chain is Phosphoglucosamine mutase (447 aa).

S88 (phosphoserine intermediate) is an active-site residue. The Mg(2+) site is built by S88, D231, D233, and D235. At S88 the chain carries Phosphoserine.

This sequence belongs to the phosphohexose mutase family. It depends on Mg(2+) as a cofactor. Post-translationally, activated by phosphorylation.

It catalyses the reaction alpha-D-glucosamine 1-phosphate = D-glucosamine 6-phosphate. Catalyzes the conversion of glucosamine-6-phosphate to glucosamine-1-phosphate. The sequence is that of Phosphoglucosamine mutase from Methanococcus maripaludis (strain C7 / ATCC BAA-1331).